Reading from the N-terminus, the 92-residue chain is Small ribosomal subunit protein uS19 (92 aa).

The protein belongs to the universal ribosomal protein uS19 family.

Protein S19 forms a complex with S13 that binds strongly to the 16S ribosomal RNA. The chain is Small ribosomal subunit protein uS19 from Neisseria gonorrhoeae (strain ATCC 700825 / FA 1090).